A 185-amino-acid chain; its full sequence is Elongation factor P (185 aa).

Belongs to the elongation factor P family.

It is found in the cytoplasm. Its pathway is protein biosynthesis; polypeptide chain elongation. In terms of biological role, involved in peptide bond synthesis. Stimulates efficient translation and peptide-bond synthesis on native or reconstituted 70S ribosomes in vitro. Probably functions indirectly by altering the affinity of the ribosome for aminoacyl-tRNA, thus increasing their reactivity as acceptors for peptidyl transferase. In Alkaliphilus metalliredigens (strain QYMF), this protein is Elongation factor P.